The following is a 929-amino-acid chain: Chitin synthase 1 (929 aa).

Over residues 1–12 (MAYRGAGGPGGG) the composition is skewed to gly residues. 2 disordered regions span residues 1–43 (MAYR…QEDE) and 114–156 (MGGH…GGGL). Composition is skewed to polar residues over residues 21-33 (QDLN…SNVQ) and 140-149 (SWVQRQNPNA). N-linked (GlcNAc...) asparagine glycosylation occurs at asparagine 560. Helical transmembrane passes span 587 to 607 (FFFH…WFSL), 643 to 663 (LFNA…FILA), 678 to 698 (SFFV…YLVV), 730 to 750 (VILL…FMYL), and 758 to 778 (SFPY…VYAF). Asparagine 801 carries an N-linked (GlcNAc...) asparagine glycan. 2 consecutive transmembrane segments (helical) span residues 857–877 (TMLV…ITSD) and 897–917 (FLLF…LWFL).

It belongs to the chitin synthase family. Class III subfamily.

It localises to the cell membrane. The enzyme catalyses [(1-&gt;4)-N-acetyl-beta-D-glucosaminyl](n) + UDP-N-acetyl-alpha-D-glucosamine = [(1-&gt;4)-N-acetyl-beta-D-glucosaminyl](n+1) + UDP + H(+). Polymerizes chitin, a structural polymer of the cell wall and septum, by transferring the sugar moiety of UDP-GlcNAc to the non-reducing end of the growing chitin polymer. CHS1 and CHS3 have compensatory functions in cell wall modifications in responses to stresses. Involved in appressoria formation and required for full virulence. This is Chitin synthase 1 from Pyricularia oryzae (strain 70-15 / ATCC MYA-4617 / FGSC 8958) (Rice blast fungus).